A 265-amino-acid polypeptide reads, in one-letter code: Zearalenone hydrolase (265 aa).

Positions 35, 105, and 106 each coordinate zearalenone. Residue S105 is part of the active site. The active site involves E129. Zearalenone contacts are provided by W185, Y189, and H243. The active site involves H243.

The protein belongs to the AB hydrolase superfamily. Hydrolase RutD family. Homodimer.

The enzyme catalyses zearalenone + H2O = hydrolyzed zearalenone + H(+). Its function is as follows. Lactonohydrolase that specifically hydrolyzes zearalenone (ZEN), an oestrogenic mycotoxin produced by numerous Fusarium specie, into a non-toxic alkylresorcinol product. In Cladophialophora bantiana (strain ATCC 10958 / CDC1940 / 8579 / CBS 173.52) (Xylohypha bantiana), this protein is Zearalenone hydrolase.